The primary structure comprises 290 residues: Ribosomal protein L11 methyltransferase (290 aa).

Residues T136, G159, D181, and N228 each coordinate S-adenosyl-L-methionine.

The protein belongs to the methyltransferase superfamily. PrmA family.

Its subcellular location is the cytoplasm. The enzyme catalyses L-lysyl-[protein] + 3 S-adenosyl-L-methionine = N(6),N(6),N(6)-trimethyl-L-lysyl-[protein] + 3 S-adenosyl-L-homocysteine + 3 H(+). Functionally, methylates ribosomal protein L11. The protein is Ribosomal protein L11 methyltransferase of Allorhizobium ampelinum (strain ATCC BAA-846 / DSM 112012 / S4) (Agrobacterium vitis (strain S4)).